A 643-amino-acid polypeptide reads, in one-letter code: Protein disulfide-isomerase A4 (643 aa).

An N-terminal signal peptide occupies residues 1 to 20 (MRPRKAWMLVLLLALVQLLA). 2 consecutive Thioredoxin domains span residues 21–168 (VASA…EVSQ) and 170–300 (NWTP…EFLK). The tract at residues 24-54 (AGAPDEDSTDKEDAIEEDEEEDEDDDDDDDD) is disordered. The segment covering 27–54 (PDEDSTDKEDAIEEDEEEDEDDDDDDDD) has biased composition (acidic residues). Positions 90 to 93 (CGHC) match the CXXC motif. 2 cysteine pairs are disulfide-bonded: cysteine 90-cysteine 93 and cysteine 205-cysteine 208. At lysine 365 the chain carries N6-acetyllysine. The 132-residue stretch at 503–634 (FKKGKLKPVI…LSKFIEEHAT (132 aa)) folds into the Thioredoxin 3 domain. The CXXC signature appears at 553 to 556 (CGHC). Cysteine 553 and cysteine 556 are joined by a disulfide. Positions 640 to 643 (KEEL) match the Prevents secretion from ER motif.

It belongs to the protein disulfide isomerase family. As to quaternary structure, part of a large chaperone multiprotein complex comprising DNAJB11, HSP90B1, HSPA5, HYOU, PDIA2, PDIA4, PDIA6, PPIB, SDF2L1, UGGT1 and very small amounts of ERP29, but not, or at very low levels, CALR nor CANX. Component of a complex containing at least CRELD2, MANF, MATN3 and PDIA4.

The protein resides in the endoplasmic reticulum lumen. It is found in the melanosome. The catalysed reaction is Catalyzes the rearrangement of -S-S- bonds in proteins.. This chain is Protein disulfide-isomerase A4 (PDIA4), found in Bos taurus (Bovine).